A 521-amino-acid chain; its full sequence is Two-component response regulator ARR11 (521 aa).

The 116-residue stretch at 12–127 folds into the Response regulatory domain; the sequence is RVLVVDDDPT…ELKIIWQHVL (116 aa). Aspartate 63 bears the 4-aspartylphosphate mark. Positions 192 to 195 match the Nuclear localization signal motif; it reads KKAR. Positions 195–246 form a DNA-binding region, myb-like GARP; sequence RVVWSFELHHKFVNAVNQIGCDHKAGPKKILDLMNVPWLTRENVASHLQKYR.

Belongs to the ARR family. Type-B subfamily. As to quaternary structure, binds the target DNA as a monomer. Two-component system major event consists of a His-to-Asp phosphorelay between a sensor histidine kinase (HK) and a response regulator (RR). In plants, the His-to-Asp phosphorelay involves an additional intermediate named Histidine-containing phosphotransfer protein (HPt). This multistep phosphorelay consists of a His-Asp-His-Asp sequential transfer of a phosphate group between first a His and an Asp of the HK protein, followed by the transfer to a conserved His of the HPt protein and finally the transfer to an Asp in the receiver domain of the RR protein. As to expression, detected in the whole plant. Predominantly expressed in roots and stems.

The protein resides in the nucleus. Its function is as follows. Transcriptional activator that binds specifically to the DNA sequence 5'-[AG]GATT-3'. Functions as a response regulator involved in His-to-Asp phosphorelay signal transduction system. Phosphorylation of the Asp residue in the receiver domain activates the ability of the protein to promote the transcription of target genes. Could directly activate some type-A response regulators in response to cytokinins. The chain is Two-component response regulator ARR11 (ARR11) from Arabidopsis thaliana (Mouse-ear cress).